The primary structure comprises 3303 residues: Protein unc-80 homolog (3303 aa).

The segment covering 1–37 (MVTNAAGTAATGGATSNTTNNNNLQTNNNSHGANNNN) has biased composition (low complexity). The disordered stretch occupies residues 1–43 (MVTNAAGTAATGGATSNTTNNNNLQTNNNSHGANNNNDDFDFD). A helical membrane pass occupies residues 202–222 (LFSVPTITLFVYLFAPIIHHL). 7 disordered regions span residues 284–316 (LSAD…VSSP), 361–422 (LQQQ…SESI), 491–512 (LYQG…KDYI), 526–546 (AEEP…KKKR), 1036–1067 (FRRR…SERN), 1443–1563 (LHEP…DDTA), and 1627–1671 (VEPT…KDRI). Positions 361–377 (LQQQQSQSRRGSRQSMN) are enriched in low complexity. 2 stretches are compositionally biased toward basic and acidic residues: residues 378–391 (SRDK…KFEF) and 401–422 (SMKE…SESI). Residues 495–505 (PGSNSRDSPGS) are compositionally biased toward polar residues. The segment covering 1058 to 1067 (SDSTSSSERN) has biased composition (polar residues). The span at 1490-1499 (FKRRSLKLRR) shows a compositional bias: basic residues. Positions 1546–1556 (DDQQPESPTDS) are enriched in polar residues. The span at 1660–1671 (KRKDSLSRKDRI) shows a compositional bias: basic and acidic residues. The next 3 membrane-spanning stretches (helical) occupy residues 1969–1989 (VYEI…ALFL), 2018–2038 (LPQQ…MFYV), and 2048–2068 (LVGS…GIMF). Disordered regions lie at residues 2518 to 2550 (NGPY…FEEE), 3003 to 3158 (EEKR…FKAQ), and 3170 to 3262 (FRHS…YRDN). The segment covering 3003 to 3018 (EEKRYDRESSEQKKSD) has biased composition (basic and acidic residues). 2 stretches are compositionally biased toward polar residues: residues 3033–3053 (QRPS…SHSH) and 3071–3106 (PSDT…SQSG). Residues 3124–3134 (SGHGSGGGIGT) are compositionally biased toward gly residues. Over residues 3135–3152 (GAASAVPSHLSHSQSLQQ) the composition is skewed to low complexity. Positions 3198-3217 (SRLQRSKAASRKTFRLKRSR) are enriched in basic residues. Residues 3226-3239 (IVTSQEEQAPQAQA) are compositionally biased toward polar residues. Residues 3246 to 3257 (SWDSVSQTSSTS) are compositionally biased toward low complexity.

The protein belongs to the unc-80 family. Interacts with unc79 and na. Can interact with unc79 independently of na.

It is found in the membrane. Component of the na (narrow abdomen) sodium channel complex. In the circadian clock neurons it functions with na and unc79 to promote circadian rhythmicity. This chain is Protein unc-80 homolog, found in Drosophila melanogaster (Fruit fly).